The chain runs to 793 residues: E3 UFM1-protein ligase 1 (793 aa).

At A2 the chain carries N-acetylalanine. The segment at 2-200 (ADAWEEIRRL…RGLFSAITRP (199 aa)) is mediates interaction with DDRGK1. Residues 2–212 (ADAWEEIRRL…VNSLVSKYGF (211 aa)) form a required for E3 UFM1-protein ligase activity region. The tract at residues 121–250 (DQLSEEVNDK…KAVFVPDIYS (130 aa)) is involved in CDK5RAP3-binding. Residues 200–400 (PTPVNSLVSK…NPVHLITEED (201 aa)) form a mediates interaction with TRIP4 region. The interval 410–473 (VNTSKKDKKD…SSHGGKKKPD (64 aa)) is disordered. Residue R433 is modified to Omega-N-methylarginine. Phosphoserine is present on residues S458 and S462. The segment at 490-683 (IQDAPEEFIS…QLKVTEDPAL (194 aa)) is mediates interaction with CDK5RAP3. At T535 the chain carries Phosphothreonine. The interval 742-765 (NKKTGQGEDPSSDELDKEQHDVTN) is disordered. 2 positions are modified to phosphoserine: S752 and S753.

Belongs to the UFL1 family. In terms of assembly, catalytic component of the UFM1 ribosome E3 ligase (UREL) complex, composed of UFL1, DDRGK1 and CDK5RAP3. Interacts with E2-like enzyme UFC1. Interacts with RELA. Interacts with NBN; promoting recruitment to double-strand breaks following DNA damage. Interacts (when phosphorylated) with YWHAG/14-3-3-gamma; sequestering UFL1 and preventing its association with PDCD1/PD-1 substrate. Post-translationally, ubiquitinated, leading to its degradation by the proteasome. Interaction with CDK5RAP3 protects both proteins against ubiquitination and degradation via the proteasome. In terms of processing, phosphorylated at Ser-462 by ATM, enhancing protein ligase activity and promoting ATM activation in a positive feedback loop. Phosphorylation at Thr-535 by AMPK promotes its interaction with YWHAG/14-3-3-gamma, thereby preventing UFL1 association with PDCD1/PD-1 substrate. As to expression, ubiquitously expressed with higher expression in pancreatic islets and other secretory tissues. In the embryonic brain at 17 dpc, detected in Sox2-positive neural stem cells and in Slc1a3/GLAST-positive radial glia. In perinatal brain, highly expressed in Slc1a3-positive Bergmann glia of the cerebellum. Continues to be expressed in Bergmann glia of adult brain at 16 weeks. Expressed in adult heart. Highly expressed in the intestinal exocrine cells.

It localises to the endoplasmic reticulum membrane. The protein resides in the cytoplasm. It is found in the cytosol. The protein localises to the nucleus. Its subcellular location is the chromosome. E3 protein ligase that mediates ufmylation, the covalent attachment of the ubiquitin-like modifier UFM1 to lysine residues on target proteins, and which plays a key role in various processes, such as ribosome recycling, response to DNA damage, interferon response or reticulophagy (also called ER-phagy). Catalyzes ufmylation of many protein, such as CD274/PD-L1, CDK5RAP3, CYB5R3, DDRGK1, EIF6, histone H4, MRE11, P4HB, PDCD1/PD-1, TRIP4, RPN1, RPS20/uS10, RPL10/uL16, RPL26/uL24, SYVN1/HRD1 and TP53/p53. As part of the UREL complex, plays a key role in ribosome recycling by catalyzing mono-ufmylation of RPL26/uL24 subunit of the 60S ribosome. Ufmylation of RPL26/uL24 occurs on free 60S ribosomes following ribosome dissociation: it weakens the junction between post-termination 60S subunits and SEC61 translocons, promoting release and recycling of the large ribosomal subunit from the endoplasmic reticulum membrane. Ufmylation of RPL26/uL24 and subsequent 60S ribosome recycling either take place after normal termination of translation or after ribosome stalling during cotranslational translocation at the endoplasmic reticulum. Involved in reticulophagy in response to endoplasmic reticulum stress by mediating ufmylation of proteins such as CYB5R3 and RPN1, thereby promoting lysosomal degradation of ufmylated proteins. Ufmylation in response to endoplasmic reticulum stress is essential for processes such as hematopoiesis, blood vessel morphogenesis or inflammatory response. Mediates ufmylation of DDRGK1 and CDK5RAP3; the role of these modifications is however unclear: as both DDRGK1 and CDK5RAP3 act as substrate adapters for ufmylation, it is uncertain whether ufmylation of these proteins is a collateral effect or is required for ufmylation. Acts as a negative regulator of T-cell activation by mediating ufmylation and stabilization of PDCD1/PD-1. Also involved in the response to DNA damage: recruited to double-strand break sites following DNA damage and mediates monoufmylation of histone H4 and ufmylation of MRE11. Mediates ufmylation of TP53/p53, promoting its stability. Catalyzes ufmylation of TRIP4, thereby playing a role in nuclear receptor-mediated transcription. Required for hematopoietic stem cell function and hematopoiesis. The chain is E3 UFM1-protein ligase 1 from Mus musculus (Mouse).